We begin with the raw amino-acid sequence, 352 residues long: 3-isopropylmalate dehydrogenase (352 aa).

Substrate contacts are provided by Arg96, Arg106, Arg134, and Asp220. Mg(2+) is bound by residues Asp220, Asp244, and Asp248. 277–289 (GSAPDIAGKNLAN) lines the NAD(+) pocket.

The protein belongs to the isocitrate and isopropylmalate dehydrogenases family. LeuB type 1 subfamily. Homodimer. Mg(2+) is required as a cofactor. Mn(2+) serves as cofactor.

The protein resides in the cytoplasm. The catalysed reaction is (2R,3S)-3-isopropylmalate + NAD(+) = 4-methyl-2-oxopentanoate + CO2 + NADH. The protein operates within amino-acid biosynthesis; L-leucine biosynthesis; L-leucine from 3-methyl-2-oxobutanoate: step 3/4. In terms of biological role, catalyzes the oxidation of 3-carboxy-2-hydroxy-4-methylpentanoate (3-isopropylmalate) to 3-carboxy-4-methyl-2-oxopentanoate. The product decarboxylates to 4-methyl-2 oxopentanoate. This chain is 3-isopropylmalate dehydrogenase, found in Desulfitobacterium hafniense (strain Y51).